The chain runs to 174 residues: Sarcoplasmic calcium-binding protein (174 aa).

The residue at position 1 (S1) is an N-acetylserine. 4 consecutive EF-hand domains span residues 3 to 38 (LWVQ…FAKE), 55 to 90 (GVWD…NAKA), 91 to 126 (VVEG…LGLN), and 125 to 160 (LNPD…FFIN). D16, D18, D20, and D27 together coordinate Ca(2+). Residues D104, N106, D108, M110, E115, D138, N140, D142, and E149 each contribute to the Ca(2+) site.

Functionally, like parvalbumins, SCPs seem to be more abundant in fast contracting muscles, but no functional relationship can be established from this distribution. The sequence is that of Sarcoplasmic calcium-binding protein from Perinereis vancaurica tetradentata (Sandworm).